A 350-amino-acid chain; its full sequence is Eukaryotic translation initiation factor 3 subunit I (350 aa).

WD repeat units follow at residues 8-49 (GHER…GTLE), 51-89 (HQGV…CVYT), 91-135 (DSPS…ATLS), 149-188 (SEGS…LVTS), 198-240 (EKNV…KVYK), and 296-335 (GHFG…QDFL).

Belongs to the eIF-3 subunit I family. As to quaternary structure, component of the eukaryotic translation initiation factor 3 (eIF-3) complex.

The protein localises to the cytoplasm. Functionally, component of the eukaryotic translation initiation factor 3 (eIF-3) complex, which is involved in protein synthesis of a specialized repertoire of mRNAs and, together with other initiation factors, stimulates binding of mRNA and methionyl-tRNAi to the 40S ribosome. The eIF-3 complex specifically targets and initiates translation of a subset of mRNAs involved in cell proliferation. The sequence is that of Eukaryotic translation initiation factor 3 subunit I from Candida albicans (strain SC5314 / ATCC MYA-2876) (Yeast).